A 524-amino-acid polypeptide reads, in one-letter code: Cytosolic Fe-S cluster assembly factor NAR1 (524 aa).

The [4Fe-4S] cluster site is built by Cys20, Cys52, Cys55, Cys58, Cys158, and Cys206. The tract at residues Ile362–Asn388 is disordered. Low complexity predominate over residues Asn369–Asn388. Positions 408 and 412 each coordinate [4Fe-4S] cluster. The segment at Ser501–Trp524 is disordered.

The protein belongs to the NARF family.

Component of the cytosolic Fe/S protein assembly machinery. Required for maturation of extramitochondrial Fe/S proteins. May play a role in the transfer of pre-assembled Fe/S clusters to target apoproteins. This is Cytosolic Fe-S cluster assembly factor NAR1 (NAR1) from Vanderwaltozyma polyspora (strain ATCC 22028 / DSM 70294 / BCRC 21397 / CBS 2163 / NBRC 10782 / NRRL Y-8283 / UCD 57-17) (Kluyveromyces polysporus).